The following is a 105-amino-acid chain: uncharacterized protein (105 aa).

A Cupin type-2 domain is found at 33-100 (LYALDAGTTD…SEDLRVLVVF (68 aa)).

This is an uncharacterized protein from Streptomyces coelicolor (strain ATCC BAA-471 / A3(2) / M145).